The following is a 1041-amino-acid chain: Sarcoplasmic/endoplasmic reticulum calcium ATPase 2 (1041 aa).

The Cytoplasmic segment spans residues Met1–Thr48. Residues Leu49–Ala69 form a helical membrane-spanning segment. Residues Cys70 to Val89 lie on the Lumenal side of the membrane. The helical transmembrane segment at Glu90–Arg110 threads the bilayer. Topologically, residues Asn111–Leu253 are cytoplasmic. A helical membrane pass occupies residues Asp254–Ile273. The Lumenal portion of the chain corresponds to Ile274–Tyr295. A helical transmembrane segment spans residues Phe296–Ala313. Ca(2+) contacts are provided by Val304, Ala305, Ile307, and Glu309. The Cytoplasmic segment spans residues Val314–Met756. The active-site 4-aspartylphosphate intermediate is Asp351. Mg(2+) is bound by residues Asp351 and Thr353. ATP is bound by residues Thr353, Glu442, Arg489, Lys514, Arg559, Thr624, Gly625, Asp626, Arg677, and Lys683. Asp702 provides a ligand contact to Mg(2+). ATP is bound at residue Asn705. The helical transmembrane segment at Lys757–Leu776 threads the bilayer. Ca(2+) is bound by residues Asn767 and Glu770. The Lumenal portion of the chain corresponds to Thr777–Leu786. The helical transmembrane segment at Ile787–Gly807 threads the bilayer. The tract at residues Ile787 to Gly807 is interaction with PLN. Ca(2+)-binding residues include Asn795, Thr798, and Asp799. The Cytoplasmic portion of the chain corresponds to Phe808–Leu827. Residues Ile828–Ala850 traverse the membrane as a helical segment. Residues Ala851 to Met896 lie on the Lumenal side of the membrane. Cys875 and Cys887 are oxidised to a cystine. The helical transmembrane segment at Thr897–Ser916 threads the bilayer. Glu907 lines the Ca(2+) pocket. Topologically, residues Glu917–Asn929 are cytoplasmic. A helical transmembrane segment spans residues Ile930–Tyr948. Residues Trp931–Leu942 form an interaction with PLN region. Topologically, residues Val949–Val963 are lumenal. A helical membrane pass occupies residues Thr964–Lys984. The Cytoplasmic portion of the chain corresponds to Tyr985–Trp1041.

Belongs to the cation transport ATPase (P-type) (TC 3.A.3) family. Type IIA subfamily. Interacts with sarcolipin (SLN). Interacts with phospholamban (PLN). Interacts with myoregulin (MRLN). Interacts with DWORF. Interacts with TMX2. The cofactor is Mg(2+). As to expression, only isoform 2 is detected in heart, while both isoforms are expressed in brain, with isoform 2 being predominant.

The protein localises to the endoplasmic reticulum membrane. It is found in the sarcoplasmic reticulum membrane. The enzyme catalyses Ca(2+)(in) + ATP + H2O = Ca(2+)(out) + ADP + phosphate + H(+). Its activity is regulated as follows. Reversibly inhibited by phospholamban (PLN) at low calcium concentrations. Inhibited by sarcolipin (SLN) and myoregulin (MRLN). Enhanced by DWORF; DWORF increases activity by displacing sarcolipin (SLN), phospholamban (PLN) and myoregulin (MRLN). In terms of biological role, this magnesium-dependent enzyme catalyzes the hydrolysis of ATP coupled with the translocation of calcium from the cytosol to the sarcoplasmic reticulum lumen. Isoform SERCA2A is involved in the regulation of the contraction/relaxation cycle. May act as a regulator of TNFSF11-mediated Ca(2+) signaling during osteoclastogenesis. This is Sarcoplasmic/endoplasmic reticulum calcium ATPase 2 (ATP2A2) from Gallus gallus (Chicken).